A 633-amino-acid polypeptide reads, in one-letter code: Beta-myrcene synthase TPS15CT (633 aa).

Residues 1–55 (MHCMAVHQFSPSIVSSLPTISTYNNNHFCRFFTPKTSISPISKTKSKSSTCYPIQ) constitute a chloroplast transit peptide. (2E)-geranyl diphosphate is bound by residues R344, D381, D385, R525, and D528. 2 residues coordinate Mg(2+): D381 and D385. The DDXXD motif signature appears at 381-385 (DDIYD). 3 residues coordinate Mg(2+): D528, T532, and E536.

It belongs to the terpene synthase family. Tpsb subfamily. The cofactor is Mg(2+). Requires Mn(2+) as cofactor.

It is found in the plastid. The protein resides in the chloroplast. It carries out the reaction (2E)-geranyl diphosphate = beta-myrcene + diphosphate. It functions in the pathway secondary metabolite biosynthesis; terpenoid biosynthesis. Its function is as follows. Involved in monoterpene (C10) olefins biosynthesis, constituants of cannabinoids and terpenoids-rich resins. Catalyzes strictly the conversion of (2E)-geranyl diphosphate to beta-myrcene. In Cannabis sativa (Hemp), this protein is Beta-myrcene synthase TPS15CT.